The following is a 253-amino-acid chain: Imidazole glycerol phosphate synthase subunit HisF (253 aa).

Active-site residues include D11 and D130.

Belongs to the HisA/HisF family. As to quaternary structure, heterodimer of HisH and HisF.

The protein localises to the cytoplasm. The enzyme catalyses 5-[(5-phospho-1-deoxy-D-ribulos-1-ylimino)methylamino]-1-(5-phospho-beta-D-ribosyl)imidazole-4-carboxamide + L-glutamine = D-erythro-1-(imidazol-4-yl)glycerol 3-phosphate + 5-amino-1-(5-phospho-beta-D-ribosyl)imidazole-4-carboxamide + L-glutamate + H(+). It participates in amino-acid biosynthesis; L-histidine biosynthesis; L-histidine from 5-phospho-alpha-D-ribose 1-diphosphate: step 5/9. Functionally, IGPS catalyzes the conversion of PRFAR and glutamine to IGP, AICAR and glutamate. The HisF subunit catalyzes the cyclization activity that produces IGP and AICAR from PRFAR using the ammonia provided by the HisH subunit. The sequence is that of Imidazole glycerol phosphate synthase subunit HisF from Ruegeria pomeroyi (strain ATCC 700808 / DSM 15171 / DSS-3) (Silicibacter pomeroyi).